A 691-amino-acid polypeptide reads, in one-letter code: F-box/LRR-repeat protein 5 (691 aa).

The hemerythrin-like stretch occupies residues 1-159 (MAPFPEEVDV…IKKKVIAQHC (159 aa)). The Fe(3+) site is built by His15, His57, Glu58, Glu61, His80, His126, and Glu130. In terms of domain architecture, F-box spans 202 to 248 (STGITHLPPEVMLSIFSYLNPQELCRCSQVSMKWSQLTKTGSLWKHL). LRR repeat units follow at residues 340-364 (SSAV…LDLT), 365-392 (QTDI…DLSG), 393-418 (CEKI…QSGF), 479-508 (LWML…CVVE), 576-607 (TRLP…SLSG), 608-635 (CYQI…NLSG), and 636-661 (CLTI…YFYY). 4 residues coordinate [2Fe-2S] cluster: Cys662, Cys676, Cys686, and Cys687.

In terms of assembly, part of a SCF (SKP1-cullin-F-box) protein ligase complex. Interacts with ACO1/IRP1, IREB2/IRP2; the interaction depends on the [2Fe-2S] cluster. Interacts with DCTN1/p150-glued. [2Fe-2S] cluster is required as a cofactor. Post-translationally, polybiquitinated upon iron and oxygen depletion, leading to its degradation by the proteasome. Ubiquitination is regulated by the hemerythrin-like region that acts as an oxygen and iron sensor. Undergoes constitutive ubiquitin-dependent degradation at the steady state by HERC2.

Its subcellular location is the cytoplasm. It localises to the perinuclear region. It is found in the nucleus. It participates in protein modification; protein ubiquitination. An iron-sulfur cluster promotes IRP2 polyubiquitination and degradation in response to both iron and oxygen concentrations. Functionally, component of some SCF (SKP1-cullin-F-box) protein ligase complex that plays a central role in iron homeostasis by promoting the ubiquitination and subsequent degradation of IREB2/IRP2. The C-terminal domain of FBXL5 contains a redox-sensitive [2Fe-2S] cluster that, upon oxidation, promotes binding to IRP2 to effect its oxygen-dependent degradation. Under iron deficiency conditions, the N-terminal hemerythrin-like (Hr) region, which contains a diiron metal center, cannot bind iron and undergoes conformational changes that destabilize the FBXL5 protein and cause its ubiquitination and degradation. When intracellular iron levels start rising, the Hr region is stabilized. Additional increases in iron levels facilitate the assembly and incorporation of a redox active [2Fe-2S] cluster in the C-terminal domain. Only when oxygen level is high enough to maintain the cluster in its oxidized state can FBXL5 recruit IRP2 as a substrate for polyubiquination and degradation. Promotes ubiquitination and subsequent degradation of the dynactin complex component DCTN1. Within the nucleus, promotes the ubiquitination of SNAI1; preventing its interaction with DNA and promoting its degradation. Negatively regulates DNA damage response by mediating the ubiquitin-proteasome degradation of the DNA repair protein NABP2. This is F-box/LRR-repeat protein 5 (FBXL5) from Pongo abelii (Sumatran orangutan).